The chain runs to 387 residues: Histone deacetylase 2 (387 aa).

Residues 73–382 (KVSIIYSSSY…IENLSRQGLI (310 aa)) are histone deacetylase. Histidine 201 functions as the Proton donor/acceptor in the catalytic mechanism. Aspartate 238, histidine 240, and aspartate 318 together coordinate Zn(2+).

This sequence belongs to the histone deacetylase family. HD type 3 subfamily. Zn(2+) is required as a cofactor.

The protein localises to the nucleus. It catalyses the reaction N(6)-acetyl-L-lysyl-[histone] + H2O = L-lysyl-[histone] + acetate. In terms of biological role, responsible for the deacetylation of lysine residues on the N-terminal part of the core histones (H2A, H2B, H3 and H4). Histone deacetylation gives a tag for epigenetic repression and plays an important role in transcriptional regulation, cell cycle progression and developmental events. Histone deacetylases act via the formation of large multiprotein complexes. This Arabidopsis thaliana (Mouse-ear cress) protein is Histone deacetylase 2 (HDA2).